Consider the following 588-residue polypeptide: Succinate dehydrogenase flavoprotein subunit (588 aa).

Residues 14 to 19 (GAGGAG), 37 to 52 (SKVF…AQGG), and D221 each bind FAD. Position 45 is a tele-8alpha-FAD histidine (H45). Substrate contacts are provided by H242 and T254. R286 serves as the catalytic Proton acceptor. H354 is a binding site for substrate. E388 contacts FAD. R399 contacts substrate. FAD is bound at residue 404–405 (SL).

It belongs to the FAD-dependent oxidoreductase 2 family. FRD/SDH subfamily. As to quaternary structure, part of an enzyme complex containing four subunits: a flavoprotein, an iron-sulfur, cytochrome b-556, and a hydrophobic anchor protein. FAD serves as cofactor.

It localises to the cell inner membrane. The enzyme catalyses a quinone + succinate = fumarate + a quinol. It participates in carbohydrate metabolism; tricarboxylic acid cycle; fumarate from succinate (bacterial route): step 1/1. Its function is as follows. Two distinct, membrane-bound, FAD-containing enzymes are responsible for the catalysis of fumarate and succinate interconversion; the fumarate reductase is used in anaerobic growth, and the succinate dehydrogenase is used in aerobic growth. The sequence is that of Succinate dehydrogenase flavoprotein subunit (sdhA) from Salmonella typhimurium (strain LT2 / SGSC1412 / ATCC 700720).